The chain runs to 269 residues: Oligoribonuclease, mitochondrial (269 aa).

The region spanning 55-227 (LVWIDCEMTG…SDIKESIAQL (173 aa)) is the Exonuclease domain. The active site involves Y184. Residues 240-269 (ETESVESIGSEQPESPSSSTSSLKRQRTDF) form a disordered region. Positions 245-261 (ESIGSEQPESPSSSTSS) are enriched in low complexity.

The protein belongs to the oligoribonuclease family.

It localises to the mitochondrion. In terms of biological role, 3'-to-5' exoribonuclease specific for small oligoribonucleotides. The polypeptide is Oligoribonuclease, mitochondrial (REX2) (Saccharomyces cerevisiae (strain ATCC 204508 / S288c) (Baker's yeast)).